Consider the following 560-residue polypeptide: 5'-nucleotidase (560 aa).

An N-terminal signal peptide occupies residues 1–21 (MNQRLIIKTALSAAILASLAG). A lipid anchor (N-palmitoyl cysteine) is attached at cysteine 22. Residue cysteine 22 is the site of S-diacylglycerol cysteine attachment. A divalent metal cation contacts are provided by aspartate 45, histidine 47, aspartate 88, asparagine 120, histidine 221, histidine 256, and glutamine 258. Residues phenylalanine 432 and 501 to 507 (YNASGGD) contribute to the substrate site.

This sequence belongs to the 5'-nucleotidase family. It depends on chloride as a cofactor. Requires Mg(2+) as cofactor.

The protein localises to the cell outer membrane. It catalyses the reaction a ribonucleoside 5'-phosphate + H2O = a ribonucleoside + phosphate. Functionally, degradation of extracellular 5'-nucleotides for nutritional needs. The polypeptide is 5'-nucleotidase (nutA) (Vibrio parahaemolyticus serotype O3:K6 (strain RIMD 2210633)).